Consider the following 240-residue polypeptide: Enolase-phosphatase E1 (240 aa).

Mg(2+)-binding residues include Asp-9 and Glu-11. Residues 129–130 (SS) and Lys-168 contribute to the substrate site. Asp-195 is a Mg(2+) binding site.

This sequence belongs to the HAD-like hydrolase superfamily. MasA/MtnC family. Monomer. Mg(2+) serves as cofactor.

Its subcellular location is the cytoplasm. The protein resides in the nucleus. The enzyme catalyses 5-methylsulfanyl-2,3-dioxopentyl phosphate + H2O = 1,2-dihydroxy-5-(methylsulfanyl)pent-1-en-3-one + phosphate. It participates in amino-acid biosynthesis; L-methionine biosynthesis via salvage pathway; L-methionine from S-methyl-5-thio-alpha-D-ribose 1-phosphate: step 3/6. Its pathway is amino-acid biosynthesis; L-methionine biosynthesis via salvage pathway; L-methionine from S-methyl-5-thio-alpha-D-ribose 1-phosphate: step 4/6. In terms of biological role, bifunctional enzyme that catalyzes the enolization of 2,3-diketo-5-methylthiopentyl-1-phosphate (DK-MTP-1-P) into the intermediate 2-hydroxy-3-keto-5-methylthiopentenyl-1-phosphate (HK-MTPenyl-1-P), which is then dephosphorylated to form the acireductone 1,2-dihydroxy-3-keto-5-methylthiopentene (DHK-MTPene). This is Enolase-phosphatase E1 from Candida tropicalis (strain ATCC MYA-3404 / T1) (Yeast).